The following is a 153-amino-acid chain: Putative pre-16S rRNA nuclease (153 aa).

Belongs to the YqgF nuclease family.

It is found in the cytoplasm. Could be a nuclease involved in processing of the 5'-end of pre-16S rRNA. This Prochlorococcus marinus (strain MIT 9215) protein is Putative pre-16S rRNA nuclease.